Consider the following 243-residue polypeptide: Probable heat shock transcription factor (243 aa).

Residues 9 to 102 (INKFIRRLYK…GDNLLPCIQR (94 aa)) mediate DNA binding. The involved in trimerization stretch occupies residues 121-164 (QLQDLLQYLNNQNFKLEGEIKSLKDRVDQQDCTINGLVQLLTRI).

This sequence belongs to the HSF family. In terms of assembly, homotrimer. Homotrimerization increases the affinity of HSF1 to DNA.

The protein resides in the nucleus. Its function is as follows. DNA-binding transcription factor that specifically binds heat shock promoter elements (HSE) and activates transcription. This chain is Probable heat shock transcription factor, found in Vairimorpha ceranae (strain BRL01) (Microsporidian parasite).